The chain runs to 615 residues: Sterol 3-beta-glucosyltransferase UGT80B1 (615 aa).

A disordered region spans residues 1 to 54 (MASNVFDHPLQELEGEDNGVKSEKASLLETSGSVDTTPEDSGHRSSDGHRGLDH). The span at 40–54 (DSGHRSSDGHRGLDH) shows a compositional bias: basic and acidic residues.

It belongs to the glycosyltransferase 28 family. In terms of tissue distribution, expressed in developing seeds, seedlings, leaves and around the apical tip of cotyledons. In embryo, expressed in the seed coat and cotyledons.

It catalyses the reaction a sterol + UDP-alpha-D-glucose = a sterol 3-beta-D-glucoside + UDP + H(+). Involved in the biosynthesis of sterol glucosides. Catalyzes the synthesis of steryl glycosides (SGs) and acyl steryl glycosides (ASGs) which are the most abundant sterol derivatives in higher plants. Can act on several sterols like sitosterol, campesterol and stigmasterol. Is required for embryonic development, seed suberin accumulation, cutin formation and flavanoid accumulation in the seed coat. Both UGT80A2 and UGT80B1 are required for the normal production of SGs and ASGs in seeds. This Arabidopsis thaliana (Mouse-ear cress) protein is Sterol 3-beta-glucosyltransferase UGT80B1.